We begin with the raw amino-acid sequence, 354 residues long: Vanillate O-demethylase oxygenase subunit (354 aa).

Residues 7-107 (WYVACTPDEI…VEERYGFIWV (101 aa)) form the Rieske domain. Residues Cys47, His49, Cys66, and His69 each contribute to the [2Fe-2S] cluster site.

This sequence belongs to the bacterial ring-hydroxylating dioxygenase alpha subunit family. This demethylase system consists of two proteins: an oxygenase and an oxygenase reductase. The cofactor is [2Fe-2S] cluster. Fe cation serves as cofactor.

The catalysed reaction is vanillate + NADH + O2 + H(+) = 3,4-dihydroxybenzoate + formaldehyde + NAD(+) + H2O. Its pathway is xenobiotic degradation; vanillyl-alcohol degradation. This Pseudomonas sp. (strain HR199 / DSM 7063) protein is Vanillate O-demethylase oxygenase subunit (vanA).